We begin with the raw amino-acid sequence, 161 residues long: Nucleotide-binding protein Daci_4781 (161 aa).

Belongs to the YajQ family.

Functionally, nucleotide-binding protein. The polypeptide is Nucleotide-binding protein Daci_4781 (Delftia acidovorans (strain DSM 14801 / SPH-1)).